The primary structure comprises 338 residues: 5-dehydro-2-deoxygluconokinase (338 aa).

Belongs to the carbohydrate kinase PfkB family.

It catalyses the reaction 5-dehydro-2-deoxy-D-gluconate + ATP = 6-phospho-5-dehydro-2-deoxy-D-gluconate + ADP + H(+). Its pathway is polyol metabolism; myo-inositol degradation into acetyl-CoA; acetyl-CoA from myo-inositol: step 5/7. Functionally, catalyzes the phosphorylation of 5-dehydro-2-deoxy-D-gluconate (2-deoxy-5-keto-D-gluconate or DKG) to 6-phospho-5-dehydro-2-deoxy-D-gluconate (DKGP). The sequence is that of 5-dehydro-2-deoxygluconokinase from Mesomycoplasma hyopneumoniae (strain J / ATCC 25934 / NCTC 10110) (Mycoplasma hyopneumoniae).